Reading from the N-terminus, the 253-residue chain is Triosephosphate isomerase (253 aa).

9–11 (NWK) contributes to the substrate binding site. The Electrophile role is filled by His94. The active-site Proton acceptor is the Glu163. Substrate is bound by residues Gly169, Ser209, and 230–231 (GG).

Belongs to the triosephosphate isomerase family. As to quaternary structure, homodimer.

Its subcellular location is the cytoplasm. It carries out the reaction D-glyceraldehyde 3-phosphate = dihydroxyacetone phosphate. It participates in carbohydrate biosynthesis; gluconeogenesis. The protein operates within carbohydrate degradation; glycolysis; D-glyceraldehyde 3-phosphate from glycerone phosphate: step 1/1. Its function is as follows. Involved in the gluconeogenesis. Catalyzes stereospecifically the conversion of dihydroxyacetone phosphate (DHAP) to D-glyceraldehyde-3-phosphate (G3P). The polypeptide is Triosephosphate isomerase (Dehalococcoides mccartyi (strain ATCC BAA-2100 / JCM 16839 / KCTC 5957 / BAV1)).